Here is a 359-residue protein sequence, read N- to C-terminus: Guanine nucleotide-binding protein subunit alpha-11 (359 aa).

2 S-palmitoyl cysteine lipidation sites follow: Cys-9 and Cys-10. The region spanning 38 to 359 is the G-alpha domain; the sequence is RELKLLLLGT…QLNLKEYNLV (322 aa). Residues 41 to 54 form a G1 motif region; it reads KLLLLGTGESGKST. Residues 46–53 and 180–183 each bind GTP; these read GTGESGKS and LRVR. Ser-53 provides a ligand contact to Mg(2+). The segment at 178 to 186 is G2 motif; sequence DVLRVRVPT. Residue Thr-186 coordinates Mg(2+). The segment at 201-210 is G3 motif; sequence FRMVDVGGQR. The tract at residues 270–277 is G4 motif; the sequence is ILFLNKKD. GTP contacts are provided by residues 274 to 277 and Ala-331; that span reads NKKD. A G5 motif region spans residues 329–334; that stretch reads TCATDT.

The protein belongs to the G-alpha family. G(q) subfamily. G proteins are composed of 3 units; alpha, beta and gamma. The alpha chain contains the guanine nucleotide binding site. Interacts with RGS22. Interacts with NTSR1.

It localises to the cell membrane. The protein localises to the cytoplasm. It carries out the reaction GTP + H2O = GDP + phosphate + H(+). Functionally, guanine nucleotide-binding proteins (G proteins) function as transducers downstream of G protein-coupled receptors (GPCRs) in numerous signaling cascades. The alpha chain contains the guanine nucleotide binding site and alternates between an active, GTP-bound state and an inactive, GDP-bound state. Signaling by an activated GPCR promotes GDP release and GTP binding. The alpha subunit has a low GTPase activity that converts bound GTP to GDP, thereby terminating the signal. Both GDP release and GTP hydrolysis are modulated by numerous regulatory proteins. Signaling is mediated via phospholipase C-beta-dependent inositol lipid hydrolysis for signal propagation: activates phospholipase C-beta: following GPCR activation, GNA11 activates PLC-beta (PLCB1, PLCB2, PLCB3 or PLCB4), leading to production of diacylglycerol (DAG) and inositol 1,4,5-trisphosphate (IP3). Transduces FFAR4 signaling in response to long-chain fatty acids (LCFAs). Together with GNAQ, required for heart development. In the respiratory epithelium, transmits OXGR1-dependent signals that lead to downstream intracellular Ca(2+) release and mucocilliary clearance of airborne pathogens. The sequence is that of Guanine nucleotide-binding protein subunit alpha-11 (Gna11) from Rattus norvegicus (Rat).